The following is a 1214-amino-acid chain: Reverse gyrase (1214 aa).

An RG N-terminal-type zinc finger spans residues 1-37; that stretch reads MKAIYRDMCPNCRGAITDERLAAKNPCDACLDEPISM. Residues cysteine 9, cysteine 12, cysteine 27, and cysteine 30 each coordinate Zn(2+). ATP is bound by residues glutamine 89 and 106–113; that span reads APTGMGKS. One can recognise a Helicase ATP-binding domain in the interval 93-252; that stretch reads VKRIIKGKSF…WEIIKLKKQL (160 aa). The DEAD box signature appears at 213–216; the sequence is DDVD. Positions 635-1214 are topoisomerase I; the sequence is DLVKSALMIV…YEEILRYVKS (580 aa). Residues 639–802 enclose the Toprim domain; it reads SALMIVESPN…VIKRIEFHEV (164 aa). Residue glutamate 645 coordinates Mg(2+). The segment at 719 to 748 adopts an RG C-terminal-type zinc-finger fold; the sequence is IKRCRDCGHQFVDWEEKGVCPRCGSRNVYD. Zn(2+) contacts are provided by cysteine 722, cysteine 725, cysteine 738, and cysteine 741. Aspartate 771 provides a ligand contact to Mg(2+). The 395-residue stretch at 818–1212 folds into the Topo IA-type catalytic domain; the sequence is NEDRVNAQLV…ELYEEILRYV (395 aa). Residue tyrosine 955 is the O-(5'-phospho-DNA)-tyrosine intermediate of the active site.

The protein in the N-terminal section; belongs to the DEAD box helicase family. DDVD subfamily. It in the C-terminal section; belongs to the type IA topoisomerase family. Monomer. Requires Zn(2+) as cofactor. The cofactor is Mg(2+).

The protein resides in the cytoplasm. It catalyses the reaction ATP + H2O = ADP + phosphate + H(+). In terms of biological role, modifies the topological state of DNA by introducing positive supercoils in an ATP-dependent process. Increases the linking number in steps of +1. Binds to single-stranded DNA, transiently cleaves and then rejoins the ends, introducing a positive supercoil in the process. The scissile phosphodiester is attacked by the catalytic tyrosine of the enzyme, resulting in the formation of a DNA-(5'-phosphotyrosyl)-enzyme intermediate. Probably involved in rewinding DNA strands in regions of the chromosome that have opened up to allow replication, transcription, DNA repair and/or for DNA protection. This is Reverse gyrase from Pyrococcus furiosus (strain ATCC 43587 / DSM 3638 / JCM 8422 / Vc1).